A 952-amino-acid chain; its full sequence is Glycine dehydrogenase (decarboxylating) (952 aa).

Lys703 carries the N6-(pyridoxal phosphate)lysine modification.

The protein belongs to the GcvP family. In terms of assembly, the glycine cleavage system is composed of four proteins: P, T, L and H. Requires pyridoxal 5'-phosphate as cofactor.

It catalyses the reaction N(6)-[(R)-lipoyl]-L-lysyl-[glycine-cleavage complex H protein] + glycine + H(+) = N(6)-[(R)-S(8)-aminomethyldihydrolipoyl]-L-lysyl-[glycine-cleavage complex H protein] + CO2. The glycine cleavage system catalyzes the degradation of glycine. The P protein binds the alpha-amino group of glycine through its pyridoxal phosphate cofactor; CO(2) is released and the remaining methylamine moiety is then transferred to the lipoamide cofactor of the H protein. The protein is Glycine dehydrogenase (decarboxylating) of Mycobacterium leprae (strain Br4923).